A 67-amino-acid polypeptide reads, in one-letter code: Small ribosomal subunit protein bS21 (67 aa).

The protein belongs to the bacterial ribosomal protein bS21 family.

This is Small ribosomal subunit protein bS21 from Desulfovibrio desulfuricans (strain ATCC 27774 / DSM 6949 / MB).